The chain runs to 119 residues: Large ribosomal subunit protein bL19 (119 aa).

This sequence belongs to the bacterial ribosomal protein bL19 family.

Its function is as follows. This protein is located at the 30S-50S ribosomal subunit interface and may play a role in the structure and function of the aminoacyl-tRNA binding site. The chain is Large ribosomal subunit protein bL19 from Petrotoga mobilis (strain DSM 10674 / SJ95).